We begin with the raw amino-acid sequence, 216 residues long: Octanoyltransferase (216 aa).

In terms of domain architecture, BPL/LPL catalytic spans 24–212 (KFRKECILFL…NLCSFLEPIN (189 aa)). Substrate-binding positions include 69–76 (RGGDFTAH), 140–142 (SIG), and 153–155 (GIA). Catalysis depends on Cys171, which acts as the Acyl-thioester intermediate.

This sequence belongs to the LipB family.

It is found in the cytoplasm. It carries out the reaction octanoyl-[ACP] + L-lysyl-[protein] = N(6)-octanoyl-L-lysyl-[protein] + holo-[ACP] + H(+). It participates in protein modification; protein lipoylation via endogenous pathway; protein N(6)-(lipoyl)lysine from octanoyl-[acyl-carrier-protein]: step 1/2. Catalyzes the transfer of endogenously produced octanoic acid from octanoyl-acyl-carrier-protein onto the lipoyl domains of lipoate-dependent enzymes. Lipoyl-ACP can also act as a substrate although octanoyl-ACP is likely to be the physiological substrate. This is Octanoyltransferase from Leptospira interrogans serogroup Icterohaemorrhagiae serovar copenhageni (strain Fiocruz L1-130).